The primary structure comprises 503 residues: Lysine--tRNA ligase (503 aa).

Mg(2+) is bound by residues glutamate 412 and glutamate 419.

It belongs to the class-II aminoacyl-tRNA synthetase family. In terms of assembly, homodimer. Mg(2+) serves as cofactor.

The protein localises to the cytoplasm. The catalysed reaction is tRNA(Lys) + L-lysine + ATP = L-lysyl-tRNA(Lys) + AMP + diphosphate. This is Lysine--tRNA ligase from Idiomarina loihiensis (strain ATCC BAA-735 / DSM 15497 / L2-TR).